Reading from the N-terminus, the 339-residue chain is Agamous-like MADS-box protein AGL86 (339 aa).

The region spanning 1–60 (MRSKIKLSLIANKTSRRTTFRKRKGGITNKLHELTTLCGVKACAVISSPYENPVVWPSTE) is the MADS-box domain. The stretch at 86–112 (TYLQDKITKETKKLESLRRENRESQLR) forms a coiled coil.

Interacts with AGL61/DIANA and AGL62.

The protein resides in the nucleus. Functionally, probable transcription factor. The protein is Agamous-like MADS-box protein AGL86 (AGL86) of Arabidopsis thaliana (Mouse-ear cress).